We begin with the raw amino-acid sequence, 236 residues long: L-aspartate dehydrogenase (236 aa).

Residues 10 to 11 (AI), Asp31, 58 to 59 (AS), Tyr66, 80 to 81 (LS), Ala111, and Asn162 contribute to the NAD(+) site. His189 is a catalytic residue. 212–215 (NPKT) serves as a coordination point for NAD(+).

Belongs to the L-aspartate dehydrogenase family. In terms of assembly, homodimer.

The catalysed reaction is L-aspartate + NADP(+) + H2O = oxaloacetate + NH4(+) + NADPH + H(+). The enzyme catalyses L-aspartate + NAD(+) + H2O = oxaloacetate + NH4(+) + NADH + H(+). It functions in the pathway cofactor biosynthesis; NAD(+) biosynthesis; iminoaspartate from L-aspartate (dehydrogenase route): step 1/1. Functionally, specifically catalyzes the NAD or NADP-dependent dehydrogenation of L-aspartate to iminoaspartate. This Archaeoglobus fulgidus (strain ATCC 49558 / DSM 4304 / JCM 9628 / NBRC 100126 / VC-16) protein is L-aspartate dehydrogenase.